Here is a 61-residue protein sequence, read N- to C-terminus: MARKSKIERAKYPAKFKVRVRNRCKMCGRSRGYLRDFGLCRICFRFLANSGKIPGVVKASW.

Cys24, Cys27, Cys40, and Cys43 together coordinate Zn(2+).

This sequence belongs to the universal ribosomal protein uS14 family. Zinc-binding uS14 subfamily. Part of the 30S ribosomal subunit. Contacts proteins S3 and S10. The cofactor is Zn(2+).

Its function is as follows. Binds 16S rRNA, required for the assembly of 30S particles and may also be responsible for determining the conformation of the 16S rRNA at the A site. This is Small ribosomal subunit protein uS14 from Thermodesulfovibrio yellowstonii (strain ATCC 51303 / DSM 11347 / YP87).